The following is a 599-amino-acid chain: Afamin (599 aa).

Positions Met1 to Thr21 are cleaved as a signal peptide. Albumin domains follow at residues Leu22–Thr210, Gln211–Glu403, and Thr404–Asn599. N-linked (GlcNAc...) (complex) asparagine glycosylation is present at Asn33. Cystine bridges form between Cys77-Cys86, Cys99-Cys114, Cys113-Cys124, Cys148-Cys193, Cys192-Cys201, Cys224-Cys270, Cys269-Cys277, Cys289-Cys303, Cys302-Cys313, Cys340-Cys385, and Cys384-Cys393. N-linked (GlcNAc...) (complex) asparagine glycosylation is present at Asn109. The binding pocket for hydrophobic ligands stretch occupies residues Ala215–Lys319. Asn383 carries N-linked (GlcNAc...) (complex) asparagine; atypical glycosylation. Residue Asn402 is glycosylated (N-linked (GlcNAc...) (complex) asparagine). 6 disulfide bridges follow: Cys416-Cys462, Cys461-Cys470, Cys483-Cys499, Cys498-Cys509, Cys536-Cys581, and Cys580-Cys589. The N-linked (GlcNAc...) asparagine glycan is linked to Asn488.

It belongs to the ALB/AFP/VDB family. Forms a 1:1 complex with Wnt family members; interacts with WNT1, WNT2B, WNT3, WNT3A, WNT5A, WNT7A, WNT7B, WNT8, WNT9A, WNT9B, WNT10A and WNT10B. N-glycosylated; more than 90% of the glycans are sialylated. In terms of tissue distribution, high level detected in plasma but also in extravascular fluids such as follicular and cerebrospinal fluids (at protein level).

Its subcellular location is the secreted. In terms of biological role, functions as a carrier for hydrophobic molecules in body fluids. Essential for the solubility and activity of lipidated Wnt family members, including WNT1, WNT2B, WNT3, WNT3A, WNT5A, WNT7A, WNT7B, WNT8, WNT9A, WNT9B, WNT10A and WNT10B. Binds vitamin E. May transport vitamin E in body fluids under conditions where the lipoprotein system is not sufficient. May be involved in the transport of vitamin E across the blood-brain barrier. The sequence is that of Afamin (AFM) from Homo sapiens (Human).